Reading from the N-terminus, the 388-residue chain is Succinate--CoA ligase [ADP-forming] subunit beta (388 aa).

Residues Lys9–His244 enclose the ATP-grasp domain. ATP contacts are provided by residues Lys46, Gly53–Gly55, Glu99, Thr102, and Glu107. Residues Asn199 and Asp213 each contribute to the Mg(2+) site. Residues Asn264 and Gly321–Val323 contribute to the substrate site.

Belongs to the succinate/malate CoA ligase beta subunit family. In terms of assembly, heterotetramer of two alpha and two beta subunits. Requires Mg(2+) as cofactor.

The enzyme catalyses succinate + ATP + CoA = succinyl-CoA + ADP + phosphate. It carries out the reaction GTP + succinate + CoA = succinyl-CoA + GDP + phosphate. Its pathway is carbohydrate metabolism; tricarboxylic acid cycle; succinate from succinyl-CoA (ligase route): step 1/1. Functionally, succinyl-CoA synthetase functions in the citric acid cycle (TCA), coupling the hydrolysis of succinyl-CoA to the synthesis of either ATP or GTP and thus represents the only step of substrate-level phosphorylation in the TCA. The beta subunit provides nucleotide specificity of the enzyme and binds the substrate succinate, while the binding sites for coenzyme A and phosphate are found in the alpha subunit. In Shewanella loihica (strain ATCC BAA-1088 / PV-4), this protein is Succinate--CoA ligase [ADP-forming] subunit beta.